Reading from the N-terminus, the 812-residue chain is Lon protease (812 aa).

A Lon N-terminal domain is found at 11–204 (IPVLPLRDVV…YLMAMMESEI (194 aa)). 356–363 (GPPGVGKT) is a binding site for ATP. The Lon proteolytic domain occupies 592–773 (ENRVGQVTGL…EEEQTLSLQN (182 aa)). Active-site residues include Ser-679 and Lys-722. A compositionally biased stretch (basic and acidic residues) spans 745–764 (KENPDNAKADQDRHPVKNNE). The segment at 745 to 766 (KENPDNAKADQDRHPVKNNEEE) is disordered.

This sequence belongs to the peptidase S16 family. In terms of assembly, homohexamer. Organized in a ring with a central cavity. ATP binding and hydrolysis do not affect the oligomeric state of the enzyme.

The protein resides in the cytoplasm. It carries out the reaction Hydrolysis of proteins in presence of ATP.. With respect to regulation, contains an allosteric site (distinct from its active site), whose occupancy by an unfolded polypeptide leads to enzyme activation. In terms of biological role, ATP-dependent serine protease that mediates the selective degradation of mutant and abnormal proteins as well as certain short-lived regulatory proteins. Required for cellular homeostasis and for survival from DNA damage and developmental changes induced by stress. Degrades polypeptides processively to yield small peptide fragments that are 5 to 10 amino acids long. Binds to DNA in a double-stranded, site-specific manner. Endogenous substrates include the regulatory proteins RcsA and SulA, the transcriptional activator SoxS, and UmuD. Its overproduction specifically inhibits translation through at least two different pathways, one of them being the YoeB-YefM toxin-antitoxin system. This chain is Lon protease, found in Shigella dysenteriae serotype 1 (strain Sd197).